A 291-amino-acid chain; its full sequence is Pyridoxal 5'-phosphate synthase subunit PdxS (291 aa).

Aspartate 23 is a binding site for D-ribose 5-phosphate. Lysine 80 functions as the Schiff-base intermediate with D-ribose 5-phosphate in the catalytic mechanism. Residue glycine 152 coordinates D-ribose 5-phosphate. Residue arginine 164 coordinates D-glyceraldehyde 3-phosphate. Residues glycine 213 and 234 to 235 (GS) contribute to the D-ribose 5-phosphate site.

The protein belongs to the PdxS/SNZ family. In the presence of PdxT, forms a dodecamer of heterodimers.

It carries out the reaction aldehydo-D-ribose 5-phosphate + D-glyceraldehyde 3-phosphate + L-glutamine = pyridoxal 5'-phosphate + L-glutamate + phosphate + 3 H2O + H(+). Its pathway is cofactor biosynthesis; pyridoxal 5'-phosphate biosynthesis. Catalyzes the formation of pyridoxal 5'-phosphate from ribose 5-phosphate (RBP), glyceraldehyde 3-phosphate (G3P) and ammonia. The ammonia is provided by the PdxT subunit. Can also use ribulose 5-phosphate and dihydroxyacetone phosphate as substrates, resulting from enzyme-catalyzed isomerization of RBP and G3P, respectively. The polypeptide is Pyridoxal 5'-phosphate synthase subunit PdxS (Bifidobacterium longum (strain DJO10A)).